The chain runs to 210 residues: Pyridoxine/pyridoxamine 5'-phosphate oxidase (210 aa).

Substrate-binding positions include 7–10 and K65; that span reads RQSY. Residues 60 to 65, 75 to 76, R81, K82, and Q104 each bind FMN; these read RIVLIK and FT. 3 residues coordinate substrate: Y122, R126, and S130. Residues 139-140 and W182 each bind FMN; that span reads QS. 188–190 lines the substrate pocket; that stretch reads RLH. Residue R192 coordinates FMN.

The protein belongs to the pyridoxamine 5'-phosphate oxidase family. In terms of assembly, homodimer. It depends on FMN as a cofactor.

It catalyses the reaction pyridoxamine 5'-phosphate + O2 + H2O = pyridoxal 5'-phosphate + H2O2 + NH4(+). The enzyme catalyses pyridoxine 5'-phosphate + O2 = pyridoxal 5'-phosphate + H2O2. It functions in the pathway cofactor metabolism; pyridoxal 5'-phosphate salvage; pyridoxal 5'-phosphate from pyridoxamine 5'-phosphate: step 1/1. The protein operates within cofactor metabolism; pyridoxal 5'-phosphate salvage; pyridoxal 5'-phosphate from pyridoxine 5'-phosphate: step 1/1. Catalyzes the oxidation of either pyridoxine 5'-phosphate (PNP) or pyridoxamine 5'-phosphate (PMP) into pyridoxal 5'-phosphate (PLP). The sequence is that of Pyridoxine/pyridoxamine 5'-phosphate oxidase from Bordetella bronchiseptica (strain ATCC BAA-588 / NCTC 13252 / RB50) (Alcaligenes bronchisepticus).